Consider the following 443-residue polypeptide: D-serine dehydratase (443 aa).

Residue Lys118 is modified to N6-(pyridoxal phosphate)lysine.

The protein belongs to the serine/threonine dehydratase family. DsdA subfamily. Monomer. It depends on pyridoxal 5'-phosphate as a cofactor.

It carries out the reaction D-serine = pyruvate + NH4(+). The polypeptide is D-serine dehydratase (Photorhabdus laumondii subsp. laumondii (strain DSM 15139 / CIP 105565 / TT01) (Photorhabdus luminescens subsp. laumondii)).